The chain runs to 507 residues: Mandelamide hydrolase (507 aa).

Active-site charge relay system residues include K100 and S180. The Acyl-ester intermediate role is filled by S204.

Monomer.

The catalysed reaction is (R)-mandelamide + H2O = (R)-mandelate + NH4(+). With respect to regulation, inhibited by 3,4-dichloroisocoumarin and PMSF. Its function is as follows. Hydrolyzes both the R- and the S-enantiomers of mandelamide, and phenylacetamide. Has lower activity on 3-phenylpropionaide and lactamide. Does not hydrolyze benzamide. Hydrolyzes esters and amides with little steric bulk. Preferentially hydrolyzes aromatic substrates. The sequence is that of Mandelamide hydrolase from Pseudomonas putida (Arthrobacter siderocapsulatus).